A 459-amino-acid polypeptide reads, in one-letter code: UDP-N-acetylmuramate--L-alanine ligase (459 aa).

Glycine 118 to threonine 124 provides a ligand contact to ATP.

The protein belongs to the MurCDEF family.

The protein resides in the cytoplasm. The catalysed reaction is UDP-N-acetyl-alpha-D-muramate + L-alanine + ATP = UDP-N-acetyl-alpha-D-muramoyl-L-alanine + ADP + phosphate + H(+). The protein operates within cell wall biogenesis; peptidoglycan biosynthesis. In terms of biological role, cell wall formation. This Agathobacter rectalis (strain ATCC 33656 / DSM 3377 / JCM 17463 / KCTC 5835 / VPI 0990) (Eubacterium rectale) protein is UDP-N-acetylmuramate--L-alanine ligase.